Reading from the N-terminus, the 547-residue chain is Glutamyl-tRNA(Gln) amidotransferase subunit B, mitochondrial (547 aa).

It belongs to the GatB/GatE family. GatB subfamily. In terms of assembly, subunit of the heterotrimeric GatFAB amidotransferase (AdT) complex, composed of A, B and F subunits.

It localises to the mitochondrion. The catalysed reaction is L-glutamyl-tRNA(Gln) + L-glutamine + ATP + H2O = L-glutaminyl-tRNA(Gln) + L-glutamate + ADP + phosphate + H(+). Its function is as follows. Allows the formation of correctly charged Gln-tRNA(Gln) through the transamidation of misacylated Glu-tRNA(Gln) in the mitochondria. The reaction takes place in the presence of glutamine and ATP through an activated gamma-phospho-Glu-tRNA(Gln). This is Glutamyl-tRNA(Gln) amidotransferase subunit B, mitochondrial from Lachancea thermotolerans (strain ATCC 56472 / CBS 6340 / NRRL Y-8284) (Yeast).